Consider the following 137-residue polypeptide: Putative pre-16S rRNA nuclease (137 aa).

It belongs to the YqgF nuclease family.

It is found in the cytoplasm. Could be a nuclease involved in processing of the 5'-end of pre-16S rRNA. This chain is Putative pre-16S rRNA nuclease, found in Clostridium perfringens (strain ATCC 13124 / DSM 756 / JCM 1290 / NCIMB 6125 / NCTC 8237 / Type A).